The following is an 87-amino-acid chain: Toxin Cll4 (87 aa).

The signal sequence occupies residues 1–19 (MNSLLMITACLALIGTVWA). The LCN-type CS-alpha/beta domain occupies 20–85 (KEGYIVNYHD…VWPLPKKRCN (66 aa)). Disulfide bonds link cysteine 31–cysteine 84, cysteine 35–cysteine 60, cysteine 44–cysteine 65, and cysteine 48–cysteine 67. At asparagine 85 the chain carries Asparagine amide.

Belongs to the long (4 C-C) scorpion toxin superfamily. Sodium channel inhibitor family. Beta subfamily. Expressed by the venom gland.

It is found in the secreted. Its function is as follows. Beta toxins bind voltage-independently at site-4 of sodium channels (Nav) and shift the voltage of activation toward more negative potentials thereby affecting sodium channel activation and promoting spontaneous and repetitive firing. In Centruroides limpidus (Mexican scorpion), this protein is Toxin Cll4.